The primary structure comprises 95 residues: Small ribosomal subunit protein mS37 (95 aa).

The CHCH domain occupies Ala27–Ser69. Short sequence motifs (cx9C motif) lie at residues Cys30 to Cys40 and Cys51 to Cys61. Intrachain disulfides connect Cys30/Cys61 and Cys40/Cys51.

This sequence belongs to the mitochondrion-specific ribosomal protein mS37 family. Component of the mitochondrial small ribosomal subunit.

The protein resides in the mitochondrion. Functionally, involved in mitochondrial genome encoded proteins translation. This is Small ribosomal subunit protein mS37 (MRP10) from Eremothecium gossypii (strain ATCC 10895 / CBS 109.51 / FGSC 9923 / NRRL Y-1056) (Yeast).